Consider the following 72-residue polypeptide: MNHLVKVLIVVVAIALVLCEAQVNFSPGWGTGKRSAVQDSPCKGSAESLMYIYKLVQNEAQKILECEKFSSN.

A signal peptide spans 1 to 21; the sequence is MNHLVKVLIVVVAIALVLCEA. Gln22 carries the post-translational modification Pyrrolidone carboxylic acid. The residue at position 31 (Thr31) is a Threonine amide.

This sequence belongs to the AKH/HRTH/RPCH family. Expressed in corpora cardiaca.

It localises to the secreted. Its function is as follows. Hypertrehalosaemic factors are neuropeptides that elevate the level of trehalose in the hemolymph (trehalose is the major carbohydrate in the hemolymph of insects). This chain is Hypertrehalosaemic prohormone, found in Blaberus discoidalis (Tropical cockroach).